Here is a 522-residue protein sequence, read N- to C-terminus: Transactivator/viroplasmin protein (522 aa).

Positions Gln111–Ala126 are enriched in polar residues. 2 disordered regions span residues Gln111–Gly133 and Ser491–Gly522.

The protein belongs to the caulimoviridae viroplasmin family.

The protein localises to the host cytoplasm. Its function is as follows. Enhances the ribosomal termination-reinitiation event leading to the translation of major open reading frames on the polycistronic viral RNAs. This Arabidopsis thaliana (Mouse-ear cress) protein is Transactivator/viroplasmin protein.